A 652-amino-acid chain; its full sequence is 2-oxoglutarate carboxylase large subunit (652 aa).

Positions 26–288 constitute a Pyruvate carboxyltransferase domain; the sequence is ILITDLTPRD…DTGIDMKKLD (263 aa). Substrate contacts are provided by residues 34–38 and R105; that span reads RDGQQ. Residue D35 coordinates a divalent metal cation. The a divalent metal cation site is built by K196, H227, and H229. Residue K196 is modified to N6-carboxylysine. T362 serves as a coordination point for substrate. In terms of domain architecture, Biotinyl-binding spans 563–643; that stretch reads AEEKGIPKAT…TPDDALLRIK (81 aa). K609 carries the post-translational modification N6-biotinyllysine.

As to quaternary structure, heterohexadecamer of 8 large subunits and 8 small subunits. Mg(2+) is required as a cofactor. Requires Mn(2+) as cofactor. Co(2+) serves as cofactor. Biotinylated.

It catalyses the reaction hydrogencarbonate + 2-oxoglutarate + ATP = (S)-oxalosuccinate + ADP + phosphate + H(+). The chain is 2-oxoglutarate carboxylase large subunit from Hydrogenobacter thermophilus (strain DSM 6534 / IAM 12695 / TK-6).